A 316-amino-acid polypeptide reads, in one-letter code: 4-diphosphocytidyl-2-C-methyl-D-erythritol kinase (316 aa).

K14 is a catalytic residue. Residue 96-106 coordinates ATP; it reads PMGAGLGGGSS. D138 is a catalytic residue.

The protein belongs to the GHMP kinase family. IspE subfamily.

It carries out the reaction 4-CDP-2-C-methyl-D-erythritol + ATP = 4-CDP-2-C-methyl-D-erythritol 2-phosphate + ADP + H(+). The protein operates within isoprenoid biosynthesis; isopentenyl diphosphate biosynthesis via DXP pathway; isopentenyl diphosphate from 1-deoxy-D-xylulose 5-phosphate: step 3/6. Functionally, catalyzes the phosphorylation of the position 2 hydroxy group of 4-diphosphocytidyl-2C-methyl-D-erythritol. The protein is 4-diphosphocytidyl-2-C-methyl-D-erythritol kinase of Solibacter usitatus (strain Ellin6076).